Reading from the N-terminus, the 245-residue chain is Probable phosphatase Teth514_1060 (245 aa).

Positions 8, 10, 16, 41, 74, 102, 133, 194, and 196 each coordinate Zn(2+).

This sequence belongs to the PHP family. Requires Zn(2+) as cofactor.

The sequence is that of Probable phosphatase Teth514_1060 from Thermoanaerobacter sp. (strain X514).